A 381-amino-acid chain; its full sequence is 5-cytosine rRNA methyltransferase NSUN4 (381 aa).

The N-terminal 25 residues, 1-25, are a transit peptide targeting the mitochondrion; sequence MAAPVLRCVRKLLKLVDFTPVPRRY. S-adenosyl-L-methionine is bound by residues G182, G183, K184, and D201. Phosphoserine is present on S203. Residues R206, D234, G235, and D252 each coordinate S-adenosyl-L-methionine. C307 (nucleophile) is an active-site residue.

The protein belongs to the class I-like SAM-binding methyltransferase superfamily. RsmB/NOP family. As to quaternary structure, heterodimer with MTERFD2/MTERF4; this interaction seems to be required for NSUN4 recruitment to the mitochondrial large ribosomal subunit.

The protein localises to the mitochondrion. The catalysed reaction is a cytidine in rRNA + S-adenosyl-L-methionine = a 5-methylcytidine in rRNA + S-adenosyl-L-homocysteine + H(+). The enzyme catalyses a cytidine in mRNA + S-adenosyl-L-methionine = a 5-methylcytidine in mRNA + S-adenosyl-L-homocysteine + H(+). Mitochondrial RNA cytosine C(5)-methyltransferase that methylates cytosine to 5-methylcytosine (m5C) in various RNAs, such as rRNAs, mRNAs and some long non-coding RNAs (lncRNAs). Involved in mitochondrial ribosome small subunit (SSU) maturation by catalyzing methylation of mitochondrial 12S rRNA; the function is independent of MTERFD2/MTERF4 and assembled mitochondrial ribosome large subunit (LSU). Targeted to LSU by MTERFD2/MTERF4 and probably is involved in a final step in ribosome biogenesis to ensure that SSU and LSU are assembled. In vitro can methylate 16S rRNA of the LSU; the methylation is enhanced by MTERFD/MTERF4. Also acts as a regulator of innate immunity by marking double-stranded mitochondrial RNAs(mt-dsRNAs) generated in response to stress: catalyzes m5C modification on mitochondrial RNAs, such as a mRNAs and lncRNAs, with a preference for the termini of light-strand lncRNAs, promoting their degradation and cytosolic release. Modified light-strand lncRNAs are then recognized by C1QBP reader and recruited to the mitochondrial degradosome complex, which promotes their degradation. This is 5-cytosine rRNA methyltransferase NSUN4 from Mus musculus (Mouse).